The chain runs to 1186 residues: ATP-dependent helicase/deoxyribonuclease subunit B (1186 aa).

The protein belongs to the helicase family. AddB/RexB type 2 subfamily. In terms of assembly, heterodimer of AddA and RexB. Requires Mg(2+) as cofactor.

The heterodimer acts as both an ATP-dependent DNA helicase and an ATP-dependent, dual-direction single-stranded exonuclease. Recognizes the chi site generating a DNA molecule suitable for the initiation of homologous recombination. This subunit has 5' -&gt; 3' nuclease activity but not helicase activity. This Latilactobacillus sakei subsp. sakei (strain 23K) (Lactobacillus sakei subsp. sakei) protein is ATP-dependent helicase/deoxyribonuclease subunit B.